The primary structure comprises 460 residues: Vitamin K-dependent protein C (460 aa).

Positions 1 to 18 (MWQFRVFLLLMSTWGISS) are cleaved as a signal peptide. A propeptide spanning residues 19 to 41 (IPAHPDPVFSSSEHAHQVLRVRR) is cleaved from the precursor. A Gla domain is found at 42–87 (ANSFLEEMRPGSLERECMEEICDFEEAQEIFQNVEDTLAFWIKYFD). Glutamate 47, glutamate 48, glutamate 55, glutamate 57, glutamate 60, glutamate 61, glutamate 66, glutamate 67, glutamate 70, and glutamate 76 each carry 4-carboxyglutamate. Residues cysteine 58 and cysteine 63 are joined by a disulfide bond. 9 disulfide bridges follow: cysteine 91-cysteine 110, cysteine 100-cysteine 105, cysteine 104-cysteine 119, cysteine 121-cysteine 130, cysteine 139-cysteine 150, cysteine 146-cysteine 159, cysteine 161-cysteine 174, cysteine 182-cysteine 319, and cysteine 238-cysteine 254. EGF-like domains lie at 96–131 (LDHQ…KFCQ) and 135–175 (RFQD…MRCK). Aspartate 112 carries the (3R)-3-hydroxyaspartate modification. One can recognise a Peptidase S1 domain in the interval 213–449 (VNGTLTKQGD…YLKWIHSYIG (237 aa)). Residue asparagine 214 is glycosylated (N-linked (GlcNAc...) asparagine). Histidine 253 acts as the Charge relay system in catalysis. Asparagine 290 is a glycosylation site (N-linked (GlcNAc...) asparagine). The active-site Charge relay system is aspartate 299. Asparagine 354 carries an N-linked (GlcNAc...) asparagine glycan. 2 disulfide bridges follow: cysteine 372–cysteine 386 and cysteine 397–cysteine 425. Serine 401 functions as the Charge relay system in the catalytic mechanism.

Belongs to the peptidase S1 family. As to quaternary structure, synthesized as a single chain precursor, which is cleaved into a light chain and a heavy chain held together by a disulfide bond. The enzyme is then activated by thrombin, which cleaves a tetradecapeptide from the amino end of the heavy chain; this reaction, which occurs at the surface of endothelial cells, is strongly promoted by thrombomodulin. Post-translationally, the vitamin K-dependent, enzymatic carboxylation of some Glu residues allows the modified protein to bind calcium. The iron and 2-oxoglutarate dependent 3-hydroxylation of aspartate and asparagine is (R) stereospecific within EGF domains. Plasma; synthesized in the liver.

The protein localises to the secreted. It is found in the golgi apparatus. Its subcellular location is the endoplasmic reticulum. The catalysed reaction is Degradation of blood coagulation factors Va and VIIIa.. In terms of biological role, protein C is a vitamin K-dependent serine protease that regulates blood coagulation by inactivating factors Va and VIIIa in the presence of calcium ions and phospholipids. Exerts a protective effect on the endothelial cell barrier function. The sequence is that of Vitamin K-dependent protein C (Proc) from Mus musculus (Mouse).